The sequence spans 154 residues: MSEQANPFTQFFQLQRRSIEQSQRSMHQGIEFQKQVTRMMVDGMKAQQSVSRKGTDFARTAVKSYFEMMDSSVPGDNRMYADVKDAMDEQFDSIDEMTEQTWDVMEESFEENADAMDEIMEQSLEYLDDATEVYLEGLQEIEETSAQVTPDTPE.

It localises to the cytoplasmic granule. Its function is as follows. Polyhydroxyalkanoate (PHA) granule structural protein. Important for PHA granule formation and separation, and for cell growth. The protein is PHA granule-associated protein PhaP (phaP) of Haloferax mediterranei (strain ATCC 33500 / DSM 1411 / JCM 8866 / NBRC 14739 / NCIMB 2177 / R-4) (Halobacterium mediterranei).